The chain runs to 169 residues: Endoribonuclease YbeY (169 aa).

Residues His-126, His-130, and His-136 each contribute to the Zn(2+) site.

The protein belongs to the endoribonuclease YbeY family. Zn(2+) is required as a cofactor.

It localises to the cytoplasm. In terms of biological role, single strand-specific metallo-endoribonuclease involved in late-stage 70S ribosome quality control and in maturation of the 3' terminus of the 16S rRNA. The sequence is that of Endoribonuclease YbeY from Bradyrhizobium sp. (strain BTAi1 / ATCC BAA-1182).